Here is a 130-residue protein sequence, read N- to C-terminus: Ribonuclease P protein component (130 aa).

Belongs to the RnpA family. As to quaternary structure, consists of a catalytic RNA component (M1 or rnpB) and a protein subunit.

It catalyses the reaction Endonucleolytic cleavage of RNA, removing 5'-extranucleotides from tRNA precursor.. In terms of biological role, RNaseP catalyzes the removal of the 5'-leader sequence from pre-tRNA to produce the mature 5'-terminus. It can also cleave other RNA substrates such as 4.5S RNA. The protein component plays an auxiliary but essential role in vivo by binding to the 5'-leader sequence and broadening the substrate specificity of the ribozyme. This Desulfovibrio desulfuricans (strain ATCC 27774 / DSM 6949 / MB) protein is Ribonuclease P protein component.